A 194-amino-acid chain; its full sequence is Segregation and condensation protein B (194 aa).

Belongs to the ScpB family. As to quaternary structure, homodimer. Homodimerization may be required to stabilize the binding of ScpA to the Smc head domains. Component of a cohesin-like complex composed of ScpA, ScpB and the Smc homodimer, in which ScpA and ScpB bind to the head domain of Smc. The presence of the three proteins is required for the association of the complex with DNA.

Its subcellular location is the cytoplasm. Functionally, participates in chromosomal partition during cell division. May act via the formation of a condensin-like complex containing Smc and ScpA that pull DNA away from mid-cell into both cell halves. The polypeptide is Segregation and condensation protein B (Brevibacillus brevis (strain 47 / JCM 6285 / NBRC 100599)).